We begin with the raw amino-acid sequence, 183 residues long: Adenine phosphoribosyltransferase (183 aa).

Belongs to the purine/pyrimidine phosphoribosyltransferase family. In terms of assembly, homodimer.

It localises to the cytoplasm. It carries out the reaction AMP + diphosphate = 5-phospho-alpha-D-ribose 1-diphosphate + adenine. It participates in purine metabolism; AMP biosynthesis via salvage pathway; AMP from adenine: step 1/1. Functionally, catalyzes a salvage reaction resulting in the formation of AMP, that is energically less costly than de novo synthesis. The protein is Adenine phosphoribosyltransferase of Sodalis glossinidius (strain morsitans).